The sequence spans 904 residues: Alanine--tRNA ligase (904 aa).

H584, H588, C687, and H691 together coordinate Zn(2+).

This sequence belongs to the class-II aminoacyl-tRNA synthetase family. It depends on Zn(2+) as a cofactor.

The protein resides in the cytoplasm. It carries out the reaction tRNA(Ala) + L-alanine + ATP = L-alanyl-tRNA(Ala) + AMP + diphosphate. In terms of biological role, catalyzes the attachment of alanine to tRNA(Ala) in a two-step reaction: alanine is first activated by ATP to form Ala-AMP and then transferred to the acceptor end of tRNA(Ala). Also edits incorrectly charged Ser-tRNA(Ala) and Gly-tRNA(Ala) via its editing domain. In Mycobacterium bovis (strain ATCC BAA-935 / AF2122/97), this protein is Alanine--tRNA ligase.